The following is a 518-amino-acid chain: 12S seed storage globulin 1 (518 aa).

Positions 1–24 are cleaved as a signal peptide; sequence MATTRFPSLLFYSCIFLLCNGSMA. Intrachain disulfides connect C45–C78 and C121–C324. One can recognise a Cupin type-1 1 domain in the interval 50-240; sequence LQAFEPLRQV…ALGISQQAAQ (191 aa). The span at 281–295 shows a compositional bias: low complexity; sequence QSQQEQSTQYQVGQS. A disordered region spans residues 281 to 311; sequence QSQQEQSTQYQVGQSPQYQEGQSTQYQSGQS. The span at 296 to 311 shows a compositional bias: polar residues; sequence PQYQEGQSTQYQSGQS. Residues 330-479 form the Cupin type-1 2 domain; the sequence is QNIENPKRAD…AYRISRQESQ (150 aa). The disordered stretch occupies residues 496–518; that stretch reads FAQTGSQSYQDEGESSSTEKASE.

This sequence belongs to the 11S seed storage protein (globulins) family. As to quaternary structure, hexamer; each subunit is composed of an acidic and a basic chain derived from a single precursor and linked by a disulfide bond.

In terms of biological role, this is a seed storage protein. This is 12S seed storage globulin 1 from Avena sativa (Oat).